The following is a 165-amino-acid chain: MAEENQVENSEAAQQSPEFAIQRIYTKDVSFETPNSPAVFQLDWKPEIQLDLDTRSTKLADNTYEVVLSVTVTATVEDKTAFLAEVQQAGIFTIGNLPEAQLAHTIGAFCPTTLFPYARETVASLVNRGSFPQFNLTPVNFEGLYASYVQQRATQENVAQSSETH.

Belongs to the SecB family. As to quaternary structure, homotetramer, a dimer of dimers. One homotetramer interacts with 1 SecA dimer.

It is found in the cytoplasm. In terms of biological role, one of the proteins required for the normal export of preproteins out of the cell cytoplasm. It is a molecular chaperone that binds to a subset of precursor proteins, maintaining them in a translocation-competent state. It also specifically binds to its receptor SecA. This chain is Protein-export protein SecB, found in Colwellia psychrerythraea (strain 34H / ATCC BAA-681) (Vibrio psychroerythus).